The primary structure comprises 355 residues: Tabersonine 16-O-methyltransferase (355 aa).

Residues Ile198–Gly201, Asp222, Asp222–Leu223, Asp242–Met243, and Lys256 contribute to the S-adenosyl-L-methionine site. The active-site Proton acceptor is the His260.

It belongs to the class I-like SAM-binding methyltransferase superfamily. Cation-independent O-methyltransferase family. COMT subfamily. As to quaternary structure, homodimer. In terms of tissue distribution, expressed in leaves and flowers. Detected in stems and roots. In leaves, expressed in epidermal cells.

It is found in the cytoplasm. It catalyses the reaction 16-hydroxytabersonine + S-adenosyl-L-methionine = 16-methoxytabersonine + S-adenosyl-L-homocysteine + H(+). It functions in the pathway alkaloid biosynthesis; vindoline biosynthesis. 16-O-methyltransferase involved in the biosynthesis of vindoline. Highly specific for 16-hydroxytabersonine. No activity with tabersonine, 3-hydroxytyramine, 4-hydroxytyramine, 5-hydroxytryptamine (5HT), 2,3-dihydro-3-hydroxytabersonine, lochnericine, hoerhammericine, 16-hydroxy-2,3-dihydro-3-hydroxytabersonine, 16-hydroxylochnericine, 16-hydroxyhoerhammericine, quercetin, kaempferol and caffeic acid as substrates. This Catharanthus roseus (Madagascar periwinkle) protein is Tabersonine 16-O-methyltransferase.